A 131-amino-acid polypeptide reads, in one-letter code: MKKHGVLNSEIAAVLASLGHTDTIVIADCGLPIPDGVKRIDLAVEIGKPSFLDVLQVVADDMAIEKVTLAEEVINNNAEIKKEIELKLIEPVFEYVCHEQFKEHTKKAKAIIRTGEATPYANVILHAGVIF.

His-20 acts as the Proton donor in catalysis. Substrate contacts are provided by residues Asp-28, His-98, and 120-122 (YAN).

This sequence belongs to the RbsD / FucU family. RbsD subfamily. Homodecamer.

The protein resides in the cytoplasm. The enzyme catalyses beta-D-ribopyranose = beta-D-ribofuranose. It functions in the pathway carbohydrate metabolism; D-ribose degradation; D-ribose 5-phosphate from beta-D-ribopyranose: step 1/2. In terms of biological role, catalyzes the interconversion of beta-pyran and beta-furan forms of D-ribose. The protein is D-ribose pyranase of Bacillus cereus (strain ZK / E33L).